The sequence spans 281 residues: Nucleotide-binding protein Noc_2797 (281 aa).

8–15 (GVSGSGKS) serves as a coordination point for ATP. 58 to 61 (DARN) contributes to the GTP binding site.

It belongs to the RapZ-like family.

Displays ATPase and GTPase activities. In Nitrosococcus oceani (strain ATCC 19707 / BCRC 17464 / JCM 30415 / NCIMB 11848 / C-107), this protein is Nucleotide-binding protein Noc_2797.